Here is a 1364-residue protein sequence, read N- to C-terminus: DNA-directed RNA polymerase subunit beta (1364 aa).

The protein belongs to the RNA polymerase beta chain family. The RNAP catalytic core consists of 2 alpha, 1 beta, 1 beta' and 1 omega subunit. When a sigma factor is associated with the core the holoenzyme is formed, which can initiate transcription.

It catalyses the reaction RNA(n) + a ribonucleoside 5'-triphosphate = RNA(n+1) + diphosphate. In terms of biological role, DNA-dependent RNA polymerase catalyzes the transcription of DNA into RNA using the four ribonucleoside triphosphates as substrates. This chain is DNA-directed RNA polymerase subunit beta, found in Desulfatibacillum aliphaticivorans.